The following is a 236-amino-acid chain: Uridylate kinase (236 aa).

An ATP-binding site is contributed by 10–13 (KLSG). Gly52 contacts UMP. ATP is bound by residues Gly53 and Arg57. UMP contacts are provided by residues Asp72 and 133 to 140 (TGNPFFTT). 3 residues coordinate ATP: Thr160, Tyr166, and Asp169.

Belongs to the UMP kinase family. As to quaternary structure, homohexamer.

The protein localises to the cytoplasm. The enzyme catalyses UMP + ATP = UDP + ADP. The protein operates within pyrimidine metabolism; CTP biosynthesis via de novo pathway; UDP from UMP (UMPK route): step 1/1. Its activity is regulated as follows. Inhibited by UTP. Catalyzes the reversible phosphorylation of UMP to UDP. The protein is Uridylate kinase of Polaromonas sp. (strain JS666 / ATCC BAA-500).